Consider the following 323-residue polypeptide: Protein translocase subunit SecF (323 aa).

A run of 6 helical transmembrane segments spans residues 19 to 39 (GVIV…FKGF), 138 to 158 (ILSL…RYEW), 162 to 182 (LASV…VIVF), 189 to 209 (EVIA…IIIF), 244 to 264 (LTVF…IIGF), and 269 to 289 (LIGT…VALL).

This sequence belongs to the SecD/SecF family. SecF subfamily. Forms a complex with SecD. Part of the essential Sec protein translocation apparatus which comprises SecA, SecYEG and auxiliary proteins SecDF-YajC and YidC.

The protein localises to the cell inner membrane. Part of the Sec protein translocase complex. Interacts with the SecYEG preprotein conducting channel. SecDF uses the proton motive force (PMF) to complete protein translocation after the ATP-dependent function of SecA. The protein is Protein translocase subunit SecF of Helicobacter pylori (strain ATCC 700392 / 26695) (Campylobacter pylori).